The following is a 474-amino-acid chain: Probable protein phosphatase 2C 37 (474 aa).

Residues 1-90 (MVMASAGVNM…RDDDGCSSTA (90 aa)) are disordered. Low complexity predominate over residues 57-77 (LPASSASPSPSPTSSAASSDC). The 358-residue stretch at 113–470 (AFGSVSLAGR…DNISVVVIDL (358 aa)) folds into the PPM-type phosphatase domain. Mn(2+)-binding residues include aspartate 152, glycine 153, and aspartate 387. Residues 406–434 (LEDGSPTSGRRAARSGEAASSSAGAPAAA) are disordered. Residues 420-434 (SGEAASSSAGAPAAA) are compositionally biased toward low complexity. Aspartate 461 is a Mn(2+) binding site.

This sequence belongs to the PP2C family. It depends on Mg(2+) as a cofactor. The cofactor is Mn(2+).

It carries out the reaction O-phospho-L-seryl-[protein] + H2O = L-seryl-[protein] + phosphate. The catalysed reaction is O-phospho-L-threonyl-[protein] + H2O = L-threonyl-[protein] + phosphate. This chain is Probable protein phosphatase 2C 37, found in Oryza sativa subsp. japonica (Rice).